Consider the following 160-residue polypeptide: Ribosome maturation factor RimP (160 aa).

It belongs to the RimP family.

The protein localises to the cytoplasm. In terms of biological role, required for maturation of 30S ribosomal subunits. This is Ribosome maturation factor RimP from Cronobacter sakazakii (strain ATCC BAA-894) (Enterobacter sakazakii).